We begin with the raw amino-acid sequence, 610 residues long: UvrABC system protein C (610 aa).

The GIY-YIG domain occupies 16–94 (SQPGVYRMYD…IKLYQPRYNV (79 aa)). A UVR domain is found at 204-239 (QQVLTQLITRMEEASQQLHFEDAARIRDQIQAVRRV).

The protein belongs to the UvrC family. In terms of assembly, interacts with UvrB in an incision complex.

The protein resides in the cytoplasm. In terms of biological role, the UvrABC repair system catalyzes the recognition and processing of DNA lesions. UvrC both incises the 5' and 3' sides of the lesion. The N-terminal half is responsible for the 3' incision and the C-terminal half is responsible for the 5' incision. The sequence is that of UvrABC system protein C from Yersinia pseudotuberculosis serotype I (strain IP32953).